Here is a 287-residue protein sequence, read N- to C-terminus: MEMO1 family protein MJ0403 (287 aa).

Belongs to the MEMO1 family.

The polypeptide is MEMO1 family protein MJ0403 (Methanocaldococcus jannaschii (strain ATCC 43067 / DSM 2661 / JAL-1 / JCM 10045 / NBRC 100440) (Methanococcus jannaschii)).